The sequence spans 650 residues: PTS system mannose-specific EIIBCA component (650 aa).

Residues 1-98 (MKLLAITSCP…PEELIQKALN (98 aa)) enclose the PTS EIIB type-2 domain. Residue C9 is the Phosphocysteine intermediate; for EIIB activity of the active site. The PTS EIIC type-2 domain maps to 123-456 (IYRHLMNGVS…SLVTALFVNV (334 aa)). 7 helical membrane-spanning segments follow: residues 133–153 (FMVP…TLGG), 174–194 (IGSA…AYSI), 199–219 (GLVP…YDSA), 221–241 (GAGF…ALWI), 256–276 (IIII…FLIG), 297–317 (SSIL…GGPV), and 336–356 (IMGP…IATF). A Phosphoserine modification is found at S365. Helical transmembrane passes span 369-389 (MGKA…IPFA), 396-416 (VIPS…IGNV), and 436-456 (VLMF…FVNV). The PTS EIIA type-2 domain maps to 504-649 (DIISPELIEP…EEAYKLLEEI (146 aa)). Catalysis depends on H566, which acts as the Tele-phosphohistidine intermediate; for EIIA activity.

It localises to the cell membrane. It carries out the reaction D-mannose(out) + N(pros)-phospho-L-histidyl-[protein] = D-mannose 6-phosphate(in) + L-histidyl-[protein]. Its function is as follows. The phosphoenolpyruvate-dependent sugar phosphotransferase system (sugar PTS), a major carbohydrate active -transport system, catalyzes the phosphorylation of incoming sugar substrates concomitantly with their translocation across the cell membrane. This system is involved in mannose transport. This Bacillus subtilis (strain 168) protein is PTS system mannose-specific EIIBCA component (manP).